A 474-amino-acid polypeptide reads, in one-letter code: MRLSKTLADMDMADYSAALDPAYTTLEFENVQVLTMGNDTSPSEGANLNSSNSLGVSALCAICGDRATGKHYGASSCDGCKGFFRRSVRKNHMYSCRFSRQCVVDKDKRNQCRYCRLKKCFRAGMKKEAVQNERDRISTRRSSYEDSSLPSINALLQAEVLSQQITSPISGINGDIRAKKIANITDVCESMKEQLLVLVEWAKYIPAFCELLLDDQVALLRAHAGEHLLLGATKRSMVFKDVLLLGNDYIVPRHCPELAEMSRVSIRILDELVLPFQELQIDDNEYACLKAIIFFDPDAKGLSDPGKIKRLRSQVQVSLEDYINDRQYDSRGRFGELLLLLPTLQSITWQMIEQIQFIKLFGMAKIDNLLQEMLLGGSASDAPHAHHPLHPHLMQEHMGTNVIVANTMPSHLSNGQMCEWPRPRGQAATPETPQPSPPSGSGSESYKLLPGAITTIVKPPSAIPQPTITKQEAI.

The segment at residues 57–132 (SALCAICGDR…AGMKKEAVQN (76 aa)) is a DNA-binding region (nuclear receptor). NR C4-type zinc fingers lie at residues 60-80 (CAIC…CDGC) and 96-120 (CRFS…LKKC). A phosphoserine; by PKA mark is found at Ser142 and Ser143. Tyr144 is subject to Phosphotyrosine. An NR LBD domain is found at 147–377 (SSLPSINALL…NLLQEMLLGG (231 aa)). Thr166 carries the phosphothreonine modification. Ser167 carries the phosphoserine modification. Residues Lys234 and Lys307 each participate in a glycyl lysine isopeptide (Lys-Gly) (interchain with G-Cter in ubiquitin) cross-link. Position 313 is a phosphoserine; by AMPK (Ser313). The short motif at 368–376 (NLLQEMLLG) is the 9aaTAD element. The interval 413–450 (SNGQMCEWPRPRGQAATPETPQPSPPSGSGSESYKLLP) is disordered. A phosphothreonine mark is found at Thr429 and Thr432. Ser436 is subject to Phosphoserine. Residue Lys458 is modified to N6-acetyllysine.

The protein belongs to the nuclear hormone receptor family. NR2 subfamily. Homodimerization is required for HNF4-alpha to bind to its recognition site. Interacts with CLOCK, BMAL1, CRY1, CRY2, PER1 and PER2. Interacts with NR0B2/SHP; the resulting heterodimer is transcriptionally inactive. Interacts with DDX3X; this interaction disrupts the interaction between HNF4 and NR0B2 that forms inactive heterodimers and enhances the formation of active HNF4 homodimers. Post-translationally, phosphorylation at Ser-313 by AMPK reduces the ability to form homodimers and bind DNA. Phosphorylated in the recognition sequence R-R-S-S near the DNA-binding domain; phosphorylation results in decrease in DNA-binding activity. Phosphorylation of HNF4 depends on the diet and is decreased by a carbohydrate-rich diet and is increased by fasting. In terms of processing, the N-terminus is blocked. Acetylation at Lys-458 lowers transcriptional activation by about two-fold. In terms of tissue distribution, liver, kidney and intestine.

It is found in the nucleus. Transcriptional regulator which controls the expression of hepatic genes during the transition of endodermal cells to hepatic progenitor cells, facilitating the recruitment of RNA pol II to the promoters of target genes. Activates the transcription of CYP2C38. Represses the CLOCK-BMAL1 transcriptional activity and is essential for circadian rhythm maintenance and period regulation in the liver and colon cells. This chain is Hepatocyte nuclear factor 4-alpha (Hnf4a), found in Rattus norvegicus (Rat).